Consider the following 617-residue polypeptide: Dihydroxy-acid dehydratase (617 aa).

Residue D81 participates in Mg(2+) binding. [2Fe-2S] cluster is bound at residue C122. D123 and K124 together coordinate Mg(2+). At K124 the chain carries N6-carboxylysine. C195 contributes to the [2Fe-2S] cluster binding site. E491 lines the Mg(2+) pocket. S517 functions as the Proton acceptor in the catalytic mechanism.

It belongs to the IlvD/Edd family. In terms of assembly, homodimer. [2Fe-2S] cluster serves as cofactor. The cofactor is Mg(2+).

It carries out the reaction (2R)-2,3-dihydroxy-3-methylbutanoate = 3-methyl-2-oxobutanoate + H2O. It catalyses the reaction (2R,3R)-2,3-dihydroxy-3-methylpentanoate = (S)-3-methyl-2-oxopentanoate + H2O. The protein operates within amino-acid biosynthesis; L-isoleucine biosynthesis; L-isoleucine from 2-oxobutanoate: step 3/4. It functions in the pathway amino-acid biosynthesis; L-valine biosynthesis; L-valine from pyruvate: step 3/4. Functions in the biosynthesis of branched-chain amino acids. Catalyzes the dehydration of (2R,3R)-2,3-dihydroxy-3-methylpentanoate (2,3-dihydroxy-3-methylvalerate) into 2-oxo-3-methylpentanoate (2-oxo-3-methylvalerate) and of (2R)-2,3-dihydroxy-3-methylbutanoate (2,3-dihydroxyisovalerate) into 2-oxo-3-methylbutanoate (2-oxoisovalerate), the penultimate precursor to L-isoleucine and L-valine, respectively. The protein is Dihydroxy-acid dehydratase of Caulobacter vibrioides (strain ATCC 19089 / CIP 103742 / CB 15) (Caulobacter crescentus).